Reading from the N-terminus, the 309-residue chain is Enoyl-CoA hydratase 2, peroxisomal (309 aa).

Residues 95 to 96 (HG), Lys124, 208 to 213 (DYNPLH), Gly231, and Phe261 contribute to the substrate site. One can recognise a MaoC-like domain in the interval 183–295 (PQRQPLTVCE…TKVKERNKTV (113 aa)). A Microbody targeting signal motif is present at residues 307–309 (SSL).

Ubiquitous.

It localises to the peroxisome. It catalyses the reaction a (3R)-3-hydroxyacyl-CoA = a (2E)-enoyl-CoA + H2O. It functions in the pathway lipid metabolism; fatty acid beta-oxidation. Its function is as follows. Bidirectional monofunctional enoyl-CoA hydratase 2 involved in the degradation of even cis-unsaturated fatty acids. Devoid of 3-hydroxyacyl-CoA dehydrogenase activity. This is Enoyl-CoA hydratase 2, peroxisomal (ECH2) from Arabidopsis thaliana (Mouse-ear cress).